The sequence spans 96 residues: Interleukin-8 (96 aa).

A signal peptide spans 1–22 (MTSKLAIALLATFMLSAALCEA). Position 27 is a citrulline (R27). Cystine bridges form between C34/C61 and C36/C78.

The protein belongs to the intercrine alpha (chemokine CxC) family. As to quaternary structure, homodimer. Interacts with TNFAIP6 (via Link domain); this interaction interferes with chemokine binding to glycosaminoglycans. In terms of processing, citrullination at Arg-27 prevents proteolysis, and dampens tissue inflammation, it also enhances leukocytosis, possibly through impaired chemokine clearance from the blood circulation.

It is found in the secreted. In terms of biological role, chemotactic factor that mediates inflammatory response by attracting neutrophils, basophils, and T-cells to clear pathogens and protect the host from infection. Also plays an important role in neutrophil activation. Released in response to an inflammatory stimulus, exerts its effect by binding to the G-protein-coupled receptors CXCR1 and CXCR2, primarily found in neutrophils, monocytes and endothelial cells. G-protein heterotrimer (alpha, beta, gamma subunits) constitutively binds to CXCR1/CXCR2 receptor and activation by IL8 leads to beta and gamma subunits release from Galpha (GNAI2 in neutrophils) and activation of several downstream signaling pathways including PI3K and MAPK pathways. In Dasypus novemcinctus (Nine-banded armadillo), this protein is Interleukin-8 (CXCL8).